The primary structure comprises 140 residues: Histone H2B (140 aa).

The segment covering 1 to 10 (MPPKAAEKKP) has biased composition (basic and acidic residues). The tract at residues 1–48 (MPPKAAEKKPSTGGKAPAGKAPAEKKEAGKKTAAAASGDKKKRGKTRK) is disordered. 2 positions are modified to N6-acetyllysine; alternate: K8 and K9. Glycyl lysine isopeptide (Lys-Gly) (interchain with G-Cter in SUMO); alternate cross-links involve residues K8 and K9. Residues 11–21 (STGGKAPAGKA) show a composition bias toward low complexity. K15 is modified (N6-acetyllysine). K25 bears the N6-acetyllysine; alternate mark. K25 is covalently cross-linked (Glycyl lysine isopeptide (Lys-Gly) (interchain with G-Cter in SUMO); alternate). K26 is covalently cross-linked (Glycyl lysine isopeptide (Lys-Gly) (interchain with G-Cter in SUMO)). Residue K134 forms a Glycyl lysine isopeptide (Lys-Gly) (interchain with G-Cter in ubiquitin) linkage.

It belongs to the histone H2B family. In terms of assembly, the nucleosome is a histone octamer containing two molecules each of H2A, H2B, H3 and H4 assembled in one H3-H4 heterotetramer and two H2A-H2B heterodimers. The octamer wraps approximately 147 bp of DNA. In terms of processing, monoubiquitinated by the ubc2-bre1 complex to form H2BK123ub1. H2BK123ub1 gives a specific tag for epigenetic transcriptional activation and is also prerequisite for H3K4me and H3K79me formation. H2BK123ub1 also modulates the formation of double-strand breaks during meiosis and is a prerequisite for DNA-damage checkpoint activation. Acetylated by gcn5 to form H2BK11ac and H2BK16ac. H2BK16ac can also be formed by esa1. Acetylation of N-terminal lysines and particularly formation of H2BK11acK16ac has a positive effect on transcription. Post-translationally, sumoylation to form H2BK6su or H2BK7su, and probably also H2BK16su or H2BK17su, occurs preferentially near the telomeres and represses gene transcription.

It localises to the nucleus. It is found in the chromosome. Functionally, core component of nucleosome. Nucleosomes wrap and compact DNA into chromatin, limiting DNA accessibility to the cellular machineries which require DNA as a template. Histones thereby play a central role in transcription regulation, DNA repair, DNA replication and chromosomal stability. DNA accessibility is regulated via a complex set of post-translational modifications of histones, also called histone code, and nucleosome remodeling. In Aspergillus clavatus (strain ATCC 1007 / CBS 513.65 / DSM 816 / NCTC 3887 / NRRL 1 / QM 1276 / 107), this protein is Histone H2B (htb1).